Here is a 251-residue protein sequence, read N- to C-terminus: Triosephosphate isomerase (251 aa).

9–11 (NWK) provides a ligand contact to substrate. The active-site Electrophile is the His-96. Glu-168 functions as the Proton acceptor in the catalytic mechanism. Substrate-binding positions include Gly-174, Ser-214, and 235 to 236 (GG).

The protein belongs to the triosephosphate isomerase family. In terms of assembly, homodimer.

It is found in the cytoplasm. It catalyses the reaction D-glyceraldehyde 3-phosphate = dihydroxyacetone phosphate. Its pathway is carbohydrate biosynthesis; gluconeogenesis. It functions in the pathway carbohydrate degradation; glycolysis; D-glyceraldehyde 3-phosphate from glycerone phosphate: step 1/1. Its function is as follows. Involved in the gluconeogenesis. Catalyzes stereospecifically the conversion of dihydroxyacetone phosphate (DHAP) to D-glyceraldehyde-3-phosphate (G3P). In Porphyromonas gingivalis (strain ATCC 33277 / DSM 20709 / CIP 103683 / JCM 12257 / NCTC 11834 / 2561), this protein is Triosephosphate isomerase.